The primary structure comprises 165 residues: Nascent polypeptide-associated complex subunit beta (165 aa).

The NAC-A/B domain maps to Thr33–Leu97. Positions Gln120–Ser165 are disordered. The span at Gln134–Pro143 shows a compositional bias: acidic residues. Residues Asp144–Ser165 show a composition bias toward low complexity.

Belongs to the NAC-beta family. In terms of assembly, part of the nascent polypeptide-associated complex (NAC).

In Arabidopsis thaliana (Mouse-ear cress), this protein is Nascent polypeptide-associated complex subunit beta.